An 85-amino-acid polypeptide reads, in one-letter code: MSEFWLCFNCCIAEQPQPKRRRRIDRSMIGEPTNFVHTAHVGSGDLFTGMNSVNSIQNQMQSKGGYGGEAMSVNVQMQLVDTKAG.

S-palmitoyl cysteine attachment occurs at residues Cys-10 and Cys-11. The region spanning 29-42 (IGEPTNFVHTAHVG) is the CRIB domain.

Belongs to the CDC42SE/SPEC family.

The protein localises to the cytoplasm. Its subcellular location is the cytoskeleton. It localises to the cell membrane. Probably involved in the organization of the actin cytoskeleton by acting downstream of CDC42, inducing actin filament assembly. The sequence is that of CDC42 small effector protein 2 (cdc42se2) from Danio rerio (Zebrafish).